Here is a 367-residue protein sequence, read N- to C-terminus: MAGNSIGQLFTVTTCGESHGAGLMAIVDGVPPGLALSEADLQIDLDRRKPGTSKYSTQRRESDEVEIISGVFEGKTTGTSIGLLIRNTNQKSKDYSEIKDTFRPGHADYTYSMKYGFRDYRGGGRSSARETAMRVAAGAIAKKYLQDRLGVQIRGHVTQIGNEYSNVAEPSKIDWDFVNSNPFFCADKEAVSRFESLIDNLRREGTSCGARLEVIASGVPVGLGEPVFDRLDADIAHAMMSINAVKGVEIGDGMAVAGQFGHSSRDEMTPDGFTANHAGGILGGISSGQDIRVSIALKPTSSITTAGKSINTQGESVDMLTKGRHDPCVGVRATPIAEAMLAIVLLDHYLRHRGQNADVEQPLASIT.

Residue R48 participates in NADP(+) binding. FMN-binding positions include 125-127 (RSS), 243-244 (NA), G283, 298-302 (KPTSS), and R324.

This sequence belongs to the chorismate synthase family. As to quaternary structure, homotetramer. It depends on FMNH2 as a cofactor.

The enzyme catalyses 5-O-(1-carboxyvinyl)-3-phosphoshikimate = chorismate + phosphate. It participates in metabolic intermediate biosynthesis; chorismate biosynthesis; chorismate from D-erythrose 4-phosphate and phosphoenolpyruvate: step 7/7. Functionally, catalyzes the anti-1,4-elimination of the C-3 phosphate and the C-6 proR hydrogen from 5-enolpyruvylshikimate-3-phosphate (EPSP) to yield chorismate, which is the branch point compound that serves as the starting substrate for the three terminal pathways of aromatic amino acid biosynthesis. This reaction introduces a second double bond into the aromatic ring system. In Psychrobacter arcticus (strain DSM 17307 / VKM B-2377 / 273-4), this protein is Chorismate synthase.